The primary structure comprises 335 residues: Tetraacyldisaccharide 4'-kinase (335 aa).

Residue 58-65 (TAGGSGKT) participates in ATP binding.

The protein belongs to the LpxK family.

It carries out the reaction a lipid A disaccharide + ATP = a lipid IVA + ADP + H(+). It participates in glycolipid biosynthesis; lipid IV(A) biosynthesis; lipid IV(A) from (3R)-3-hydroxytetradecanoyl-[acyl-carrier-protein] and UDP-N-acetyl-alpha-D-glucosamine: step 6/6. Its function is as follows. Transfers the gamma-phosphate of ATP to the 4'-position of a tetraacyldisaccharide 1-phosphate intermediate (termed DS-1-P) to form tetraacyldisaccharide 1,4'-bis-phosphate (lipid IVA). The polypeptide is Tetraacyldisaccharide 4'-kinase (Shewanella frigidimarina (strain NCIMB 400)).